The sequence spans 278 residues: Diaminopimelate epimerase (278 aa).

Substrate contacts are provided by Asn-13, Gln-46, and Asn-66. The active-site Proton donor is the Cys-75. Residues 76–77 (GN), Asn-159, Asn-192, and 210–211 (ER) each bind substrate. Cys-219 functions as the Proton acceptor in the catalytic mechanism. 220 to 221 (GT) serves as a coordination point for substrate.

This sequence belongs to the diaminopimelate epimerase family. Homodimer.

It is found in the cytoplasm. It catalyses the reaction (2S,6S)-2,6-diaminopimelate = meso-2,6-diaminopimelate. Its pathway is amino-acid biosynthesis; L-lysine biosynthesis via DAP pathway; DL-2,6-diaminopimelate from LL-2,6-diaminopimelate: step 1/1. Functionally, catalyzes the stereoinversion of LL-2,6-diaminopimelate (L,L-DAP) to meso-diaminopimelate (meso-DAP), a precursor of L-lysine and an essential component of the bacterial peptidoglycan. In Laribacter hongkongensis (strain HLHK9), this protein is Diaminopimelate epimerase.